The primary structure comprises 614 residues: Dihydroxy-acid dehydratase (614 aa).

Residue Asp81 coordinates Mg(2+). Cys122 is a [2Fe-2S] cluster binding site. The Mg(2+) site is built by Asp123 and Lys124. Lys124 bears the N6-carboxylysine mark. Cys195 is a [2Fe-2S] cluster binding site. Glu491 is a binding site for Mg(2+). The Proton acceptor role is filled by Ser517.

The protein belongs to the IlvD/Edd family. As to quaternary structure, homodimer. Requires [2Fe-2S] cluster as cofactor. Mg(2+) serves as cofactor.

It carries out the reaction (2R)-2,3-dihydroxy-3-methylbutanoate = 3-methyl-2-oxobutanoate + H2O. The catalysed reaction is (2R,3R)-2,3-dihydroxy-3-methylpentanoate = (S)-3-methyl-2-oxopentanoate + H2O. It participates in amino-acid biosynthesis; L-isoleucine biosynthesis; L-isoleucine from 2-oxobutanoate: step 3/4. It functions in the pathway amino-acid biosynthesis; L-valine biosynthesis; L-valine from pyruvate: step 3/4. Functionally, functions in the biosynthesis of branched-chain amino acids. Catalyzes the dehydration of (2R,3R)-2,3-dihydroxy-3-methylpentanoate (2,3-dihydroxy-3-methylvalerate) into 2-oxo-3-methylpentanoate (2-oxo-3-methylvalerate) and of (2R)-2,3-dihydroxy-3-methylbutanoate (2,3-dihydroxyisovalerate) into 2-oxo-3-methylbutanoate (2-oxoisovalerate), the penultimate precursor to L-isoleucine and L-valine, respectively. The protein is Dihydroxy-acid dehydratase of Actinobacillus succinogenes (strain ATCC 55618 / DSM 22257 / CCUG 43843 / 130Z).